The following is a 203-amino-acid chain: Hypoxanthine-guanine phosphoribosyltransferase (203 aa).

Lys66 and Gly67 together coordinate diphosphate. Mg(2+)-binding residues include Glu122 and Asp123. Asp126 (proton acceptor) is an active-site residue. GMP is bound by residues Lys154, 175–176, and Asp182; that span reads FV. Residue Arg188 coordinates diphosphate.

It belongs to the purine/pyrimidine phosphoribosyltransferase family. The cofactor is Mg(2+).

It is found in the cytoplasm. The enzyme catalyses IMP + diphosphate = hypoxanthine + 5-phospho-alpha-D-ribose 1-diphosphate. The catalysed reaction is GMP + diphosphate = guanine + 5-phospho-alpha-D-ribose 1-diphosphate. It participates in purine metabolism; IMP biosynthesis via salvage pathway; IMP from hypoxanthine: step 1/1. The protein operates within purine metabolism; GMP biosynthesis via salvage pathway; GMP from guanine: step 1/1. Its function is as follows. Purine salvage pathway enzyme that catalyzes the transfer of the ribosyl-5-phosphate group from 5-phospho-alpha-D-ribose 1-diphosphate (PRPP) to the N9 position of the 6-oxopurines hypoxanthine and guanine to form the corresponding ribonucleotides IMP (inosine 5'-monophosphate) and GMP (guanosine 5'-monophosphate), with the release of PPi. This Mycobacterium avium protein is Hypoxanthine-guanine phosphoribosyltransferase (hpt).